The chain runs to 1312 residues: uncharacterized protein (1312 aa).

Residues 1–20 form the signal peptide; sequence MRNNLIYTMFLSCLHFETFC. The segment covering 299 to 344 has biased composition (low complexity); the sequence is TTTSSSTMLSSTTLLTTETETRESSSTGSTQTTTPSTEPSTTITTP. Disordered stretches follow at residues 299-503, 565-609, 645-692, 749-775, 812-864, 899-942, 1048-1079, and 1114-1165; these read TTTS…TTTY, EITS…PTGG, KETR…PTGG, SSSS…PTGG, KTRT…GGTT, KTRT…PTGG, KTRT…TGGT, and NTTR…TLET. Over residues 345 to 357 the composition is skewed to polar residues; it reads MEQSSTVSSVQKT. Residues 365-503 show a composition bias toward low complexity; the sequence is SSSTTVPTSA…STPATPTTTY (139 aa). Positions 565-574 are enriched in basic and acidic residues; it reads EITSDAEGCK. Positions 576–609 are enriched in low complexity; the sequence is TSSTPTPSSTSVHSTTATPSTTPGTTTYNWPTGG. Residues 645–659 show a composition bias toward basic and acidic residues; the sequence is KETRTETTTDADGCK. Over residues 660 to 692 the composition is skewed to low complexity; that stretch reads KTSSTSSSTPSLKHSTTPTPTPGTTTYNWPTGG. Residues 813-825 are compositionally biased toward basic and acidic residues; it reads TRTETTTDAEGCK. Residues 826-864 are compositionally biased toward low complexity; it reads KTSSTSKISTTPTSPTSSKPTPTSTSMTTTYNWPTGGTT. A compositionally biased stretch (polar residues) spans 899 to 908; the sequence is KTRTETTTDA. Positions 914-942 are enriched in low complexity; that stretch reads TSSTSLKPTSPSSSTASPPTTTYNWPTGG. Positions 1048 to 1057 are enriched in polar residues; the sequence is KTRTETTSDA. Low complexity predominate over residues 1063 to 1076; the sequence is TSTTQTPTTFNWPT. Residues 1114–1123 show a composition bias toward polar residues; the sequence is NTTRTETTSD. A compositionally biased stretch (low complexity) spans 1130-1154; sequence TSSGTTSTMSPGTTGGTTVSRTTNS. Residues 1155 to 1164 show a composition bias toward polar residues; the sequence is NNPIDSSTLE. The 68-residue stretch at 1239–1306 folds into the Sushi domain; sequence ATCSSLNLNL…WSGTPEKCVA (68 aa). Disulfide bonds link Cys1241/Cys1291 and Cys1273/Cys1304.

Its subcellular location is the secreted. This is an uncharacterized protein from Caenorhabditis elegans.